A 230-amino-acid chain; its full sequence is Biosynthetic peptidoglycan transglycosylase (230 aa).

The helical transmembrane segment at 11–31 (VLLVLVALFVLYQLWIFTLVL) threads the bilayer.

It belongs to the glycosyltransferase 51 family.

The protein localises to the cell inner membrane. The enzyme catalyses [GlcNAc-(1-&gt;4)-Mur2Ac(oyl-L-Ala-gamma-D-Glu-L-Lys-D-Ala-D-Ala)](n)-di-trans,octa-cis-undecaprenyl diphosphate + beta-D-GlcNAc-(1-&gt;4)-Mur2Ac(oyl-L-Ala-gamma-D-Glu-L-Lys-D-Ala-D-Ala)-di-trans,octa-cis-undecaprenyl diphosphate = [GlcNAc-(1-&gt;4)-Mur2Ac(oyl-L-Ala-gamma-D-Glu-L-Lys-D-Ala-D-Ala)](n+1)-di-trans,octa-cis-undecaprenyl diphosphate + di-trans,octa-cis-undecaprenyl diphosphate + H(+). Its pathway is cell wall biogenesis; peptidoglycan biosynthesis. Its function is as follows. Peptidoglycan polymerase that catalyzes glycan chain elongation from lipid-linked precursors. This Aromatoleum aromaticum (strain DSM 19018 / LMG 30748 / EbN1) (Azoarcus sp. (strain EbN1)) protein is Biosynthetic peptidoglycan transglycosylase.